The sequence spans 48 residues: MAKYRCGKCWKELDDDQLKTLPGVRCPYCGYRIIYMVRKPTVKIVKAI.

Zn(2+) is bound by residues Cys-6, Cys-9, Cys-26, and Cys-29.

It belongs to the archaeal Rpo12/eukaryotic RPC10 RNA polymerase subunit family. Part of the 13-subunit RNA polymerase. The cofactor is Zn(2+).

Its subcellular location is the cytoplasm. The catalysed reaction is RNA(n) + a ribonucleoside 5'-triphosphate = RNA(n+1) + diphosphate. Functionally, DNA-dependent RNA polymerase (RNAP) catalyzes the transcription of DNA into RNA using the four ribonucleoside triphosphates as substrates. In Sulfolobus acidocaldarius (strain ATCC 33909 / DSM 639 / JCM 8929 / NBRC 15157 / NCIMB 11770), this protein is DNA-directed RNA polymerase subunit Rpo12.